We begin with the raw amino-acid sequence, 500 residues long: Glycerol kinase (500 aa).

Residue threonine 12 coordinates ADP. Residues threonine 12, threonine 13, and serine 14 each contribute to the ATP site. Threonine 12 provides a ligand contact to sn-glycerol 3-phosphate. Arginine 16 is an ADP binding site. Residues arginine 82, glutamate 83, tyrosine 135, and aspartate 245 each coordinate sn-glycerol 3-phosphate. Positions 82, 83, 135, 245, and 246 each coordinate glycerol. Residues threonine 267 and glycine 310 each contribute to the ADP site. ATP contacts are provided by threonine 267, glycine 310, glutamine 314, and glycine 411. Residues glycine 411 and asparagine 415 each coordinate ADP.

It belongs to the FGGY kinase family. As to quaternary structure, homotetramer and homodimer (in equilibrium).

The enzyme catalyses glycerol + ATP = sn-glycerol 3-phosphate + ADP + H(+). It functions in the pathway polyol metabolism; glycerol degradation via glycerol kinase pathway; sn-glycerol 3-phosphate from glycerol: step 1/1. Activated by phosphorylation and inhibited by fructose 1,6-bisphosphate (FBP). Key enzyme in the regulation of glycerol uptake and metabolism. Catalyzes the phosphorylation of glycerol to yield sn-glycerol 3-phosphate. This chain is Glycerol kinase, found in Clostridium perfringens (strain SM101 / Type A).